Consider the following 382-residue polypeptide: Lipid-A-disaccharide synthase (382 aa).

This sequence belongs to the LpxB family.

The catalysed reaction is a lipid X + a UDP-2-N,3-O-bis[(3R)-3-hydroxyacyl]-alpha-D-glucosamine = a lipid A disaccharide + UDP + H(+). It functions in the pathway bacterial outer membrane biogenesis; LPS lipid A biosynthesis. Functionally, condensation of UDP-2,3-diacylglucosamine and 2,3-diacylglucosamine-1-phosphate to form lipid A disaccharide, a precursor of lipid A, a phosphorylated glycolipid that anchors the lipopolysaccharide to the outer membrane of the cell. This Koribacter versatilis (strain Ellin345) protein is Lipid-A-disaccharide synthase.